A 132-amino-acid chain; its full sequence is uncharacterized protein (132 aa).

The interval 68–91 (WSRTSPNSSRSSPRSPASMASTSS) is disordered.

This is an uncharacterized protein from Streptomyces cacaoi.